The sequence spans 277 residues: Indole-3-glycerol phosphate synthase (277 aa).

Belongs to the TrpC family.

The catalysed reaction is 1-(2-carboxyphenylamino)-1-deoxy-D-ribulose 5-phosphate + H(+) = (1S,2R)-1-C-(indol-3-yl)glycerol 3-phosphate + CO2 + H2O. Its pathway is amino-acid biosynthesis; L-tryptophan biosynthesis; L-tryptophan from chorismate: step 4/5. The polypeptide is Indole-3-glycerol phosphate synthase (Pseudomonas putida (strain ATCC 47054 / DSM 6125 / CFBP 8728 / NCIMB 11950 / KT2440)).